The following is a 537-amino-acid chain: CTP synthase (537 aa).

An amidoligase domain region spans residues 1-265 (MVHFIFVTGG…DNKVLKFFNI (265 aa)). S13 is a CTP binding site. S13 lines the UTP pocket. Residues 14–19 (SLGKGL) and D71 contribute to the ATP site. 2 residues coordinate Mg(2+): D71 and E139. Residues 146–148 (DIE) and K222 each bind CTP. Residue K222 coordinates UTP. The Glutamine amidotransferase type-1 domain occupies 290 to 536 (RIAIIAKYHK…IKAAIEYNKC (247 aa)). L-glutamine is bound at residue G352. Catalysis depends on C379, which acts as the Nucleophile; for glutamine hydrolysis. L-glutamine-binding positions include 380–383 (FGMQ), E403, and R464. Active-site residues include H509 and E511.

It belongs to the CTP synthase family. Homotetramer.

The enzyme catalyses UTP + L-glutamine + ATP + H2O = CTP + L-glutamate + ADP + phosphate + 2 H(+). The catalysed reaction is L-glutamine + H2O = L-glutamate + NH4(+). It carries out the reaction UTP + NH4(+) + ATP = CTP + ADP + phosphate + 2 H(+). The protein operates within pyrimidine metabolism; CTP biosynthesis via de novo pathway; CTP from UDP: step 2/2. With respect to regulation, allosterically activated by GTP, when glutamine is the substrate; GTP has no effect on the reaction when ammonia is the substrate. The allosteric effector GTP functions by stabilizing the protein conformation that binds the tetrahedral intermediate(s) formed during glutamine hydrolysis. Inhibited by the product CTP, via allosteric rather than competitive inhibition. Functionally, catalyzes the ATP-dependent amination of UTP to CTP with either L-glutamine or ammonia as the source of nitrogen. Regulates intracellular CTP levels through interactions with the four ribonucleotide triphosphates. The sequence is that of CTP synthase from Rickettsia conorii (strain ATCC VR-613 / Malish 7).